The sequence spans 317 residues: L-lactate dehydrogenase (317 aa).

Residues Val-16, Asp-37, Arg-42, Tyr-67, and 81–82 each bind NAD(+); that span reads GA. Substrate is bound by residues Gln-84 and Arg-90. Residues Ser-103, 120–122, and Ser-145 contribute to the NAD(+) site; that span reads AAN. Residue 122–125 coordinates substrate; the sequence is NPVD. 150 to 153 is a binding site for substrate; that stretch reads DSAR. His-177 functions as the Proton acceptor in the catalytic mechanism. Tyr-221 is subject to Phosphotyrosine. Residue Thr-230 participates in substrate binding.

It belongs to the LDH/MDH superfamily. LDH family. As to quaternary structure, homotetramer.

It is found in the cytoplasm. It catalyses the reaction (S)-lactate + NAD(+) = pyruvate + NADH + H(+). Its pathway is fermentation; pyruvate fermentation to lactate; (S)-lactate from pyruvate: step 1/1. Its function is as follows. Catalyzes the conversion of lactate to pyruvate. This chain is L-lactate dehydrogenase, found in Limosilactobacillus fermentum (strain NBRC 3956 / LMG 18251) (Lactobacillus fermentum).